Consider the following 181-residue polypeptide: UPF0302 protein lin2035 (181 aa).

Belongs to the UPF0302 family.

The polypeptide is UPF0302 protein lin2035 (Listeria innocua serovar 6a (strain ATCC BAA-680 / CLIP 11262)).